Consider the following 430-residue polypeptide: Pyrroloquinoline quinone-dependent sugar dehydrogenase (430 aa).

Positions 1–23 (MARLAPHTLLLALFVFLFGSCTA) are cleaved as a signal peptide. An N-linked (GlcNAc...) asparagine glycan is attached at N25. Position 57 (R57) interacts with pyrroloquinoline quinone. N-linked (GlcNAc...) asparagine glycosylation is found at N94 and N147. H153 contacts pyrroloquinoline quinone. N184 is a glycosylation site (N-linked (GlcNAc...) asparagine). R220 serves as a coordination point for pyrroloquinoline quinone. 2 residues coordinate Ca(2+): S240 and D242. C281 and C316 form a disulfide bridge. The N-linked (GlcNAc...) asparagine glycan is linked to N306. H330 is a pyrroloquinoline quinone binding site. N-linked (GlcNAc...) asparagine glycosylation occurs at N341. H350 serves as a coordination point for pyrroloquinoline quinone. A disulfide bridge connects residues C388 and C392.

This sequence belongs to the sugar dehydrogenase AA12 family. It depends on Ca(2+) as a cofactor. Requires pyrroloquinoline quinone as cofactor.

It is found in the secreted. In terms of biological role, pyrroloquinoline quinone (PPQ)-dependent oxidoreductase that catalyzes the oxidation of various sugars such as L-fucose. The sequence is that of Pyrroloquinoline quinone-dependent sugar dehydrogenase from Hypocrea jecorina (strain QM6a) (Trichoderma reesei).